Consider the following 905-residue polypeptide: Core protein VP3 (905 aa).

Belongs to the orbivirus VP3 family.

The protein resides in the virion. In terms of biological role, the VP3 protein is one of the five proteins (with VP1, VP4, VP6 and VP7) which form the inner capsid of the virus. The protein is Core protein VP3 (Segment-3) of African horse sickness virus (AHSV).